The primary structure comprises 303 residues: Beta-carotene 3-hydroxylase 2, chloroplastic (303 aa).

The N-terminal 52 residues, 1-52, are a transit peptide targeting the chloroplast; sequence MAAGLSTIAVTLKPLNRSSFSANHPISTAVFPPSLRFNGFRRRKILTVCFVV. The next 2 helical transmembrane spans lie at 96-116 and 130-150; these read YLIAAVMSSFGITSMAIMAVY and VLEMFGTFALSVGAAVGMEFW. The Fatty acid hydroxylase domain occupies 143 to 270; sequence AAVGMEFWAR…KFKGVPYGLF (128 aa). The Histidine box-1 motif lies at 155 to 160; the sequence is HRALWH. Residues 165–171 carry the Histidine box-2 motif; sequence NMHESHH. 2 helical membrane-spanning segments follow: residues 180–200 and 206–226; these read LNDVFAITNAVPAIGLLYYGF and VPGLCFGAGLGITMFGMAYMF. The short motif at 228–233 is the Histidine box-3 element; the sequence is HDGLVH. A Histidine box-4 motif is present at residues 254–258; sequence HQLHH.

Belongs to the sterol desaturase family. As to quaternary structure, homodimer. As to expression, expressed in leaves, flowers, stems, roots and siliques.

It localises to the plastid. The protein localises to the chloroplast membrane. It carries out the reaction all-trans-beta-carotene + 4 reduced [2Fe-2S]-[ferredoxin] + 2 O2 + 4 H(+) = all-trans-zeaxanthin + 4 oxidized [2Fe-2S]-[ferredoxin] + 2 H2O. Its function is as follows. Nonheme diiron monooxygenase involved in the biosynthesis of xanthophylls. Specific for beta-ring hydroxylations of beta-carotene. Also has a low activity toward the beta- and epsilon-rings of alpha-carotene. No activity with acyclic carotenoids such as lycopene and neurosporene. Uses ferredoxin as an electron donor. The chain is Beta-carotene 3-hydroxylase 2, chloroplastic (BETA-OHASE 2) from Arabidopsis thaliana (Mouse-ear cress).